Here is a 263-residue protein sequence, read N- to C-terminus: Trans-aconitate 2-methyltransferase (263 aa).

Belongs to the methyltransferase superfamily. Tam family.

It is found in the cytoplasm. It catalyses the reaction trans-aconitate + S-adenosyl-L-methionine = (E)-3-(methoxycarbonyl)pent-2-enedioate + S-adenosyl-L-homocysteine. In terms of biological role, catalyzes the S-adenosylmethionine monomethyl esterification of trans-aconitate. The sequence is that of Trans-aconitate 2-methyltransferase from Mycobacterium ulcerans (strain Agy99).